We begin with the raw amino-acid sequence, 294 residues long: Nucleotide-binding protein CLK_2809 (294 aa).

Glycine 8–threonine 15 contributes to the ATP binding site. Aspartate 59–glycine 62 contacts GTP.

Belongs to the RapZ-like family.

In terms of biological role, displays ATPase and GTPase activities. The polypeptide is Nucleotide-binding protein CLK_2809 (Clostridium botulinum (strain Loch Maree / Type A3)).